Here is a 274-residue protein sequence, read N- to C-terminus: Purine nucleoside phosphorylase 1 (274 aa).

Phosphate contacts are provided by residues serine 29, histidine 60, 80-82 (RFH), and alanine 112. Serine 29 bears the Phosphoserine mark. Glutamate 192 is an a purine D-ribonucleoside binding site. Position 211 (serine 211) interacts with phosphate. Asparagine 234 contacts a purine D-ribonucleoside.

Belongs to the PNP/MTAP phosphorylase family. In terms of assembly, homotrimer.

It catalyses the reaction a purine D-ribonucleoside + phosphate = a purine nucleobase + alpha-D-ribose 1-phosphate. The catalysed reaction is a purine 2'-deoxy-D-ribonucleoside + phosphate = a purine nucleobase + 2-deoxy-alpha-D-ribose 1-phosphate. It functions in the pathway purine metabolism; purine nucleoside salvage. The purine nucleoside phosphorylases catalyze the phosphorolytic breakdown of the N-glycosidic bond in the beta-(deoxy)ribonucleoside molecules, with the formation of the corresponding free purine bases and pentose-1-phosphate. Cleaves guanosine, inosine, 2'-deoxyguanosine and 2'-deoxyinosine. The chain is Purine nucleoside phosphorylase 1 (punA) from Geobacillus stearothermophilus (Bacillus stearothermophilus).